The sequence spans 495 residues: Ectonucleoside triphosphate diphosphohydrolase 2 (495 aa).

Topologically, residues methionine 1 to lysine 4 are cytoplasmic. Residues leucine 5 to leucine 25 form a helical membrane-spanning segment. Topologically, residues cysteine 26 to serine 462 are extracellular. The N-linked (GlcNAc...) asparagine glycan is linked to asparagine 64. Cysteine 75 and cysteine 99 are oxidised to a cystine. A glycan (N-linked (GlcNAc...) asparagine) is linked at asparagine 129. Glutamate 165 (proton acceptor) is an active-site residue. Position 204–208 (glycine 204–glutamine 208) interacts with ATP. 2 cysteine pairs are disulfide-bonded: cysteine 242-cysteine 284 and cysteine 265-cysteine 310. Asparagine 294 and asparagine 319 each carry an N-linked (GlcNAc...) asparagine glycan. 2 cysteine pairs are disulfide-bonded: cysteine 323-cysteine 328 and cysteine 377-cysteine 399. N-linked (GlcNAc...) asparagine glycans are attached at residues asparagine 378 and asparagine 443. The chain crosses the membrane as a helical span at residues serine 463–leucine 483. The Cytoplasmic segment spans residues arginine 484 to leucine 495.

Belongs to the GDA1/CD39 NTPase family. Requires Ca(2+) as cofactor. Mg(2+) serves as cofactor.

The protein resides in the cell membrane. Functionally, in the nervous system, could hydrolyze ATP and other nucleotides to regulate purinergic neurotransmission. Hydrolyzes ADP only to a marginal extent. The polypeptide is Ectonucleoside triphosphate diphosphohydrolase 2 (Entpd2) (Mus musculus (Mouse)).